We begin with the raw amino-acid sequence, 478 residues long: Elongation factor Tu, chloroplastic (478 aa).

A compositionally biased stretch (low complexity) spans 1-29; the sequence is MASISAATATSSTKLVSSNSTNPLLPSST. The interval 1 to 31 is disordered; it reads MASISAATATSSTKLVSSNSTNPLLPSSTKP. The transit peptide at 1-69 directs the protein to the chloroplast; the sequence is MASISAATAT…THRHRRFTVR (69 aa). A tr-type G domain is found at 79–283; sequence KPHVNIGTIG…AVDSYIPIPV (205 aa). The G1 stretch occupies residues 88–95; sequence GHVDHGKT. 88-95 provides a ligand contact to GTP; sequence GHVDHGKT. The segment at 129-133 is G2; sequence GITIN. Residues 150-153 form a G3 region; that stretch reads DCPG. GTP-binding positions include 150-154 and 205-208; these read DCPGH and NKQD. Residues 205–208 form a G4 region; it reads NKQD. The G5 stretch occupies residues 243–245; sequence SAL.

The protein belongs to the TRAFAC class translation factor GTPase superfamily. Classic translation factor GTPase family. EF-Tu/EF-1A subfamily.

The protein localises to the plastid. It localises to the chloroplast. In terms of biological role, this protein promotes the GTP-dependent binding of aminoacyl-tRNA to the A-site of ribosomes during protein biosynthesis. The sequence is that of Elongation factor Tu, chloroplastic (TUFA) from Nicotiana tabacum (Common tobacco).